We begin with the raw amino-acid sequence, 64 residues long: Large ribosomal subunit protein uL29 (64 aa).

This sequence belongs to the universal ribosomal protein uL29 family.

The protein is Large ribosomal subunit protein uL29 of Psychrobacter sp. (strain PRwf-1).